Reading from the N-terminus, the 392-residue chain is Chalcone synthase (392 aa).

The active site involves C165.

It belongs to the thiolase-like superfamily. Chalcone/stilbene synthases family.

It catalyses the reaction (E)-4-coumaroyl-CoA + 3 malonyl-CoA + 3 H(+) = 2',4,4',6'-tetrahydroxychalcone + 3 CO2 + 4 CoA. The protein operates within secondary metabolite biosynthesis; flavonoid biosynthesis. The primary product of this enzyme is 4,2',4',6'-tetrahydroxychalcone (also termed naringenin-chalcone or chalcone) which can under specific conditions spontaneously isomerize into naringenin. In Persea americana (Avocado), this protein is Chalcone synthase (CHS).